Here is a 176-residue protein sequence, read N- to C-terminus: Large ribosomal subunit protein bL19 (176 aa).

The protein belongs to the bacterial ribosomal protein bL19 family.

In terms of biological role, this protein is located at the 30S-50S ribosomal subunit interface and may play a role in the structure and function of the aminoacyl-tRNA binding site. The sequence is that of Large ribosomal subunit protein bL19 from Sinorhizobium fredii (strain NBRC 101917 / NGR234).